A 234-amino-acid polypeptide reads, in one-letter code: Opacity protein opA51 (234 aa).

A signal peptide is located at residue Ala1.

This sequence belongs to the opacity porin family.

It is found in the cell outer membrane. In terms of biological role, implicated in a number of adherence functions. OPA proteins are implicated in pathogenesis and are subject to phase variation. The sequence is that of Opacity protein opA51 (opaB) from Neisseria gonorrhoeae.